Consider the following 195-residue polypeptide: Peptidyl-tRNA hydrolase (195 aa).

Tyrosine 17 is a binding site for tRNA. Histidine 22 (proton acceptor) is an active-site residue. Positions 68, 70, and 116 each coordinate tRNA.

The protein belongs to the PTH family. In terms of assembly, monomer.

It is found in the cytoplasm. The catalysed reaction is an N-acyl-L-alpha-aminoacyl-tRNA + H2O = an N-acyl-L-amino acid + a tRNA + H(+). In terms of biological role, hydrolyzes ribosome-free peptidyl-tRNAs (with 1 or more amino acids incorporated), which drop off the ribosome during protein synthesis, or as a result of ribosome stalling. Catalyzes the release of premature peptidyl moieties from peptidyl-tRNA molecules trapped in stalled 50S ribosomal subunits, and thus maintains levels of free tRNAs and 50S ribosomes. The chain is Peptidyl-tRNA hydrolase from Shewanella amazonensis (strain ATCC BAA-1098 / SB2B).